Here is a 692-residue protein sequence, read N- to C-terminus: Small conductance calcium-activated potassium channel-like protein 3 (692 aa).

The chain crosses the membrane as a helical span at residues 270 to 290 (SLYLALFGVILMLVESEITAE). Residues 313 to 333 (TIALLYHIILYHLNDIVLELV) traverse the membrane as a helical segment. The helical transmembrane segment at 349–369 (VIQFCIEFICCGICPLPGSGE) threads the bilayer. The chain crosses the membrane as a helical span at residues 401-421 (VILSCFMLCRSYLFARFMVLH). The helical transmembrane segment at 455–475 (PVLFLTTFTFIFWIIMSWMFV) threads the bilayer. Positions 492–512 (YSNSLWFIAITFMLNGYGDIV) form an intramembrane region, pore-forming. A helical membrane pass occupies residues 520–540 (FIAIFVGVVGAVISSILIAVI). The span at 667–683 (HSTPNVPHLQGLTSSPV) shows a compositional bias: polar residues. The tract at residues 667-692 (HSTPNVPHLQGLTSSPVPSDRYDNRF) is disordered.

This sequence belongs to the potassium channel KCNN family. SK subfamily. As to quaternary structure, heterooligomer.

The protein localises to the membrane. In terms of biological role, forms a voltage-independent potassium channel activated by intracellular calcium. This is Small conductance calcium-activated potassium channel-like protein 3 (kcnl-3) from Caenorhabditis elegans.